The sequence spans 201 residues: Rho GDP-dissociation inhibitor 2 (201 aa).

Residues 1–38 (MTEKAPEPHVEEDDDDELDSKLNYKPPPQKSLKELQEM) are disordered. The residue at position 2 (Thr-2) is an N-acetylthreonine. Lys-21 bears the N6-acetyllysine mark. Position 24 is a phosphotyrosine (Tyr-24). 5 positions are modified to N6-acetyllysine: Lys-25, Lys-40, Lys-47, Lys-102, and Lys-124. Ser-145 is subject to Phosphoserine. The residue at position 175 (Lys-175) is an N6-acetyllysine.

This sequence belongs to the Rho GDI family. As to quaternary structure, interacts with RHOA. Interacts with RAC1. Interacts with RAC2. Interacts with CDC42. Detected in bone marrow, thymus and spleen.

It localises to the cytoplasm. It is found in the cytosol. In terms of biological role, regulates the GDP/GTP exchange reaction of the Rho proteins by inhibiting the dissociation of GDP from them, and the subsequent binding of GTP to them. Regulates reorganization of the actin cytoskeleton mediated by Rho family members. In Homo sapiens (Human), this protein is Rho GDP-dissociation inhibitor 2 (ARHGDIB).